We begin with the raw amino-acid sequence, 960 residues long: Phosphoenolpyruvate carboxylase 3 (960 aa).

S8 is modified (phosphoserine). Residues H167 and K597 contribute to the active site.

The protein belongs to the PEPCase type 1 family. Homotetramer. The cofactor is Mg(2+).

Its subcellular location is the cytoplasm. It carries out the reaction oxaloacetate + phosphate = phosphoenolpyruvate + hydrogencarbonate. The protein operates within photosynthesis; C4 acid pathway. By light-reversible phosphorylation. Functionally, through the carboxylation of phosphoenolpyruvate (PEP) it forms oxaloacetate, a four-carbon dicarboxylic acid source for the tricarboxylic acid cycle. In Sorghum bicolor (Sorghum), this protein is Phosphoenolpyruvate carboxylase 3.